A 716-amino-acid chain; its full sequence is Epidermal growth factor receptor kinase substrate 8-like protein 2 (716 aa).

2 disordered regions span residues 1 to 25 (MSQS…DGVA) and 182 to 243 (PQTL…SQEE). One can recognise a PID domain in the interval 46 to 202 (MHETSQYHVQ…RQRQSILPPP (157 aa)). Residues 199–208 (LPPPQGPAPI) are compositionally biased toward pro residues. Residues 234–243 (GFRRRESQEE) are compositionally biased toward basic and acidic residues. At Ser240 the chain carries Phosphoserine. Phosphothreonine is present on Thr304. The disordered stretch occupies residues 449-488 (VSPVSRQSIRNSQKHSPTSEPTPPGDALPPVSSPHTHRGY). Ser450 is subject to Phosphoserine. Over residues 452 to 467 (VSRQSIRNSQKHSPTS) the composition is skewed to polar residues. Thr470 is modified (phosphothreonine). The SH3 domain occupies 493 to 552 (AMAKYVKILYDFTARNANELSVLKDEVLEVLEDGRQWWKLRSRSGQAGYVPCNILGEARP). Position 571 is a phosphoserine (Ser571).

The protein belongs to the EPS8 family. As to quaternary structure, interacts with ABI1. Part of a complex that contains SOS1, ABI1 and EPS8L2. Associates with F-actin.

The protein localises to the cytoplasm. The protein resides in the cell projection. Its subcellular location is the stereocilium. Stimulates guanine exchange activity of SOS1. May play a role in membrane ruffling and remodeling of the actin cytoskeleton. In the cochlea, is required for stereocilia maintenance in adult hair cells. This chain is Epidermal growth factor receptor kinase substrate 8-like protein 2 (EPS8L2), found in Pongo abelii (Sumatran orangutan).